A 157-amino-acid chain; its full sequence is Nucleoside deoxyribosyltransferase (157 aa).

The Nucleophile role is filled by E98.

The protein belongs to the nucleoside deoxyribosyltransferase family. Homohexamer.

The enzyme catalyses 2-deoxy-D-ribosyl-base(1) + base(2) = 2-deoxy-D-ribosyl-base(2) + base(1).. Its pathway is nucleotide metabolism; nucleotide salvage pathway. Its function is as follows. Catalyzes the cleavage of the glycosidic bond of 2'-deoxyribonucleosides and the transfer of the deoxyribosyl moiety to an acceptor purine or pyrimidine base. This Lactobacillus leichmannii protein is Nucleoside deoxyribosyltransferase (ntd).